The chain runs to 80 residues: Small ribosomal subunit protein bS18 (80 aa).

This sequence belongs to the bacterial ribosomal protein bS18 family. Part of the 30S ribosomal subunit. Forms a tight heterodimer with protein bS6.

Binds as a heterodimer with protein bS6 to the central domain of the 16S rRNA, where it helps stabilize the platform of the 30S subunit. This Staphylococcus haemolyticus (strain JCSC1435) protein is Small ribosomal subunit protein bS18.